We begin with the raw amino-acid sequence, 185 residues long: Imidazoleglycerol-phosphate dehydratase (185 aa).

The protein belongs to the imidazoleglycerol-phosphate dehydratase family.

It is found in the cytoplasm. The catalysed reaction is D-erythro-1-(imidazol-4-yl)glycerol 3-phosphate = 3-(imidazol-4-yl)-2-oxopropyl phosphate + H2O. It participates in amino-acid biosynthesis; L-histidine biosynthesis; L-histidine from 5-phospho-alpha-D-ribose 1-diphosphate: step 6/9. The polypeptide is Imidazoleglycerol-phosphate dehydratase (Pyrobaculum arsenaticum (strain DSM 13514 / JCM 11321 / PZ6)).